We begin with the raw amino-acid sequence, 908 residues long: MPPRRSIVEVKVLDVQKRRVPNKHYVYIIRVTWSSGATEAIYRRYSKFFDLQMQMLDKFPMEGGQKDPKQRIIPFLPGKILFRRSHIRDVAVKRLIPIDEYCKALIQLPPYISQCDEVLQFFETRPEDLNPPKEEHIGKKKSGNDPTSVDPMVLEQYVVVADYQKQESSEISLSVGQVVDIIEKNESGWWFVSTAEEQGWVPATCLEGQDGVQDEFSLQPEEEEKYTVIYPYTARDQDEMNLERGAVVEVVQKNLEGWWKIRYQGKEGWAPASYLKKNSGEPLPPKLGPSSPAHSGALDLDGVSRHQNAMGREKELLNNQRDGRFEGRLVPDGDVKQRSPKMRQRPPPRRDMTIPRGLNLPKPPIPPQVEEEYYTIAEFQTTIPDGISFQAGLKVEVIEKSLSGWWYIQMEDKEGWAPATFIDKYKKTSSASRPNFLAPLPHEMTQLRLGDAAATENNTGPEAVGPSRPLPEAPHGAVDSGMLWSKDWKGGKEAPRKASSDLSASTGYEEISDPTQEEKPSLPPRKESIIKSEEELLERERQKMEPLRGSSPKPPGMILPMIPAKHAPLARDSRKPEPKLDKSKFPLRNDMGLECGHKVLAKEVKKPNLRPISRSKAELSEEKVDPTSQNLFMKSRPQVRPKPTPSPKTEPAQSEDHVDIYNLRSKLRPAKSQEKALLDGESHHAAGSHDTALSRSFLPGEGPGHGQDRSGRQDGLSPKETPCRAPPRPAKTTDPGPKNVPVPVQEATLQQRPVVPPRRPPPPKKTSSSPLSCRPLPEVRGAQREESRVAPAAGRALLVPPKAKPFLSNSSVGQDDMRGKGGLGPRVTGKVGETREKAASFLNADGPKDSLYVAVANFEGDEDTSSFQEGTVFEVREKNSSGWWFCQVLSGAPSWEGWIPSNYLRKKP.

A PX domain is found at 5-129; sequence RSIVEVKVLD…QFFETRPEDL (125 aa). At Y25 the chain carries Phosphotyrosine. SH3 domains lie at 152–211 and 221–280; these read MVLE…GQDG and EEEE…KNSG. S279 and S291 each carry phosphoserine. Disordered stretches follow at residues 280-300 and 315-366; these read GEPL…ALDL and ELLN…PPIP. Over residues 315–337 the composition is skewed to basic and acidic residues; the sequence is ELLNNQRDGRFEGRLVPDGDVKQ. The segment covering 338–347 has biased composition (basic residues); the sequence is RSPKMRQRPP. In terms of domain architecture, SH3 3 spans 368-427; sequence QVEEEYYTIAEFQTTIPDGISFQAGLKVEVIEKSLSGWWYIQMEDKEGWAPATFIDKYKK. Positions 455-832 are disordered; that stretch reads TENNTGPEAV…LGPRVTGKVG (378 aa). Basic and acidic residues-rich tracts occupy residues 486 to 499, 516 to 546, 569 to 584, 595 to 606, and 615 to 625; these read KDWK…RKAS, QEEK…KMEP, LARD…DKSK, CGHKVLAKEVKK, and SKAELSEEKVD. Phosphoserine occurs at positions 499 and 528. Position 661 is a phosphotyrosine (Y661). Residues 671-684 are compositionally biased toward basic and acidic residues; that stretch reads KSQEKALLDGESHH. Residues 754 to 764 show a composition bias toward pro residues; the sequence is VVPPRRPPPPK. Position 840 is a phosphoserine (S840). In terms of domain architecture, SH3 4 spans 847–908; that stretch reads PKDSLYVAVA…IPSNYLRKKP (62 aa).

The protein belongs to the SH3PXD2 family. Interacts with NOXO1. Interacts (via SH3 domains) with NOXA1; the interaction is direct. Interacts with ADAM15. Interacts with FASLG. Phosphorylated in SRC-transformed cells. As to expression, highly expressed in the stromal-vascular fraction of white adipose tissue with moderate expression in heart, skeletal muscle and the mature adipocyte fraction of white adipose tissue. Also expressed in brain, spleen, kidney and liver. Expressed in white and brown adipose tissues, eye, lung, heart, brain, spleen, stomach, liver and skeletal muscle (at protein level). Not expressed in kidney or bone marrow.

It localises to the cytoplasm. The protein resides in the cell projection. Its subcellular location is the podosome. Adapter protein involved in invadopodia and podosome formation and extracellular matrix degradation. Binds matrix metalloproteinases (ADAMs), NADPH oxidases (NOXs) and phosphoinositides. Acts as an organizer protein that allows NOX1- or NOX3-dependent reactive oxygen species (ROS) generation and ROS localization. Plays a role in mitotic clonal expansion during the immediate early stage of adipocyte differentiation. The protein is SH3 and PX domain-containing protein 2B (Sh3pxd2b) of Mus musculus (Mouse).